Consider the following 329-residue polypeptide: 4-hydroxythreonine-4-phosphate dehydrogenase (329 aa).

2 residues coordinate substrate: H136 and T137. A divalent metal cation-binding residues include H166, H211, and H266. Substrate is bound by residues K274, N283, and R292.

Belongs to the PdxA family. In terms of assembly, homodimer. The cofactor is Zn(2+). Mg(2+) serves as cofactor. Co(2+) is required as a cofactor.

The protein resides in the cytoplasm. The enzyme catalyses 4-(phosphooxy)-L-threonine + NAD(+) = 3-amino-2-oxopropyl phosphate + CO2 + NADH. Its pathway is cofactor biosynthesis; pyridoxine 5'-phosphate biosynthesis; pyridoxine 5'-phosphate from D-erythrose 4-phosphate: step 4/5. In terms of biological role, catalyzes the NAD(P)-dependent oxidation of 4-(phosphooxy)-L-threonine (HTP) into 2-amino-3-oxo-4-(phosphooxy)butyric acid which spontaneously decarboxylates to form 3-amino-2-oxopropyl phosphate (AHAP). This is 4-hydroxythreonine-4-phosphate dehydrogenase from Shigella boydii serotype 4 (strain Sb227).